The primary structure comprises 81 residues: Photosystem I iron-sulfur center (81 aa).

4Fe-4S ferredoxin-type domains follow at residues 2–31 (AHSV…MVPW) and 39–68 (IASA…VRVY). The [4Fe-4S] cluster site is built by C11, C14, C17, C21, C48, C51, C54, and C58.

The eukaryotic PSI reaction center is composed of at least 11 subunits. It depends on [4Fe-4S] cluster as a cofactor.

The protein localises to the plastid. Its subcellular location is the chloroplast thylakoid membrane. The catalysed reaction is reduced [plastocyanin] + hnu + oxidized [2Fe-2S]-[ferredoxin] = oxidized [plastocyanin] + reduced [2Fe-2S]-[ferredoxin]. Its function is as follows. Apoprotein for the two 4Fe-4S centers FA and FB of photosystem I (PSI); essential for photochemical activity. FB is the terminal electron acceptor of PSI, donating electrons to ferredoxin. The C-terminus interacts with PsaA/B/D and helps assemble the protein into the PSI complex. Required for binding of PsaD and PsaE to PSI. PSI is a plastocyanin-ferredoxin oxidoreductase, converting photonic excitation into a charge separation, which transfers an electron from the donor P700 chlorophyll pair to the spectroscopically characterized acceptors A0, A1, FX, FA and FB in turn. The protein is Photosystem I iron-sulfur center of Physcomitrium patens (Spreading-leaved earth moss).